The following is a 141-amino-acid chain: Large ribosomal subunit protein uL11 (141 aa).

It belongs to the universal ribosomal protein uL11 family. In terms of assembly, part of the ribosomal stalk of the 50S ribosomal subunit. Interacts with L10 and the large rRNA to form the base of the stalk. L10 forms an elongated spine to which L12 dimers bind in a sequential fashion forming a multimeric L10(L12)X complex. One or more lysine residues are methylated.

Functionally, forms part of the ribosomal stalk which helps the ribosome interact with GTP-bound translation factors. This is Large ribosomal subunit protein uL11 from Alkaliphilus metalliredigens (strain QYMF).